The sequence spans 608 residues: Glutamyl-tRNA(Gln) amidotransferase subunit E (608 aa).

The tract at residues 402–422 (EETRGANPDGTTRFLRPRPGA) is disordered.

It belongs to the GatB/GatE family. GatE subfamily. Heterodimer of GatD and GatE.

It catalyses the reaction L-glutamyl-tRNA(Gln) + L-glutamine + ATP + H2O = L-glutaminyl-tRNA(Gln) + L-glutamate + ADP + phosphate + H(+). Functionally, allows the formation of correctly charged Gln-tRNA(Gln) through the transamidation of misacylated Glu-tRNA(Gln) in organisms which lack glutaminyl-tRNA synthetase. The reaction takes place in the presence of glutamine and ATP through an activated gamma-phospho-Glu-tRNA(Gln). The GatDE system is specific for glutamate and does not act on aspartate. This chain is Glutamyl-tRNA(Gln) amidotransferase subunit E, found in Pyrobaculum calidifontis (strain DSM 21063 / JCM 11548 / VA1).